We begin with the raw amino-acid sequence, 60 residues long: Cytotoxin 2 (60 aa).

Intrachain disulfides connect C3–C21, C14–C38, C42–C53, and C54–C59.

It belongs to the three-finger toxin family. Short-chain subfamily. Type IA cytotoxin sub-subfamily. Monomer, or heterodimer with alpha-cobratoxin (AC P01391); disulfide-linked. Expressed by the venom gland.

The protein localises to the secreted. The protein resides in the target cell membrane. Its function is as follows. Monomer: shows cytolytic activity. Functionally, heterodimer: has no cytolytic activity, but retains most of the alpha-cobratoxin capacity to compete with alpha-bungarotoxin for binding to Torpedo and alpha-7/CHRNA7 nicotinic acetylcholine receptors (nAChRs) as well as to Lymnea stagnalis acetylcholine-binding protein. In Naja kaouthia (Monocled cobra), this protein is Cytotoxin 2.